Reading from the N-terminus, the 200-residue chain is GTP cyclohydrolase-2 (200 aa).

49–53 (RVHSE) is a binding site for GTP. 3 residues coordinate Zn(2+): C54, C65, and C67. GTP contacts are provided by residues Q70, 92–94 (EGR), and T114. The active-site Proton acceptor is the D126. The Nucleophile role is filled by R128. T149 and K154 together coordinate GTP.

It belongs to the GTP cyclohydrolase II family. As to quaternary structure, homodimer. It depends on Zn(2+) as a cofactor.

It carries out the reaction GTP + 4 H2O = 2,5-diamino-6-hydroxy-4-(5-phosphoribosylamino)-pyrimidine + formate + 2 phosphate + 3 H(+). It participates in cofactor biosynthesis; riboflavin biosynthesis; 5-amino-6-(D-ribitylamino)uracil from GTP: step 1/4. In terms of biological role, catalyzes the conversion of GTP to 2,5-diamino-6-ribosylamino-4(3H)-pyrimidinone 5'-phosphate (DARP), formate and pyrophosphate. The protein is GTP cyclohydrolase-2 of Klebsiella pneumoniae (strain 342).